We begin with the raw amino-acid sequence, 686 residues long: Eukaryotic translation initiation factor 3 subunit B (686 aa).

Residues 1-29 form a disordered region; that stretch reads MAKKHAGADANDSDYNEEPNFEDPPGFVD. Positions 11–21 are enriched in acidic residues; it reads NDSDYNEEPNF. Positions 53-137 constitute an RRM domain; that stretch reads SVVVVDNIPK…HTFAVNLFTD (85 aa). 5 WD repeats span residues 203–242, 289–327, 330–365, 438–480, and 526–571; these read TRERFTDTFVKWSPLGTYVVTFHKPGVAIWGGSNFQKIQK, DGMSVLSMFRWSHDDKFVARMGENSIHIYETPSFYLLDL, IKIPGIRGFSWSPTDNVIAYWVEEQNQIPARVTLME, EIRE…KPSL, and PDHF…IKRT. A coiled-coil region spans residues 590-642; sequence AEEKQKEIKKNLKKYYAVFEQKDRLRLTRASKELLEKRAQLRETFMEYRNKRI.

It belongs to the eIF-3 subunit B family. Component of the eukaryotic translation initiation factor 3 (eIF-3) complex. The eIF-3 complex interacts with pix. Interacts with mxt.

Its subcellular location is the cytoplasm. In terms of biological role, RNA-binding component of the eukaryotic translation initiation factor 3 (eIF-3) complex, which is involved in protein synthesis of a specialized repertoire of mRNAs and, together with other initiation factors, stimulates binding of mRNA and methionyl-tRNAi to the 40S ribosome. The eIF-3 complex specifically targets and initiates translation of a subset of mRNAs involved in cell proliferation. The polypeptide is Eukaryotic translation initiation factor 3 subunit B (Drosophila ananassae (Fruit fly)).